Consider the following 256-residue polypeptide: Imidazole glycerol phosphate synthase subunit HisF (256 aa).

Residues aspartate 11 and aspartate 130 contribute to the active site.

It belongs to the HisA/HisF family. Heterodimer of HisH and HisF.

The protein localises to the cytoplasm. It carries out the reaction 5-[(5-phospho-1-deoxy-D-ribulos-1-ylimino)methylamino]-1-(5-phospho-beta-D-ribosyl)imidazole-4-carboxamide + L-glutamine = D-erythro-1-(imidazol-4-yl)glycerol 3-phosphate + 5-amino-1-(5-phospho-beta-D-ribosyl)imidazole-4-carboxamide + L-glutamate + H(+). It functions in the pathway amino-acid biosynthesis; L-histidine biosynthesis; L-histidine from 5-phospho-alpha-D-ribose 1-diphosphate: step 5/9. In terms of biological role, IGPS catalyzes the conversion of PRFAR and glutamine to IGP, AICAR and glutamate. The HisF subunit catalyzes the cyclization activity that produces IGP and AICAR from PRFAR using the ammonia provided by the HisH subunit. The polypeptide is Imidazole glycerol phosphate synthase subunit HisF (Synechococcus sp. (strain CC9605)).